Here is a 370-residue protein sequence, read N- to C-terminus: Histidinol-phosphate aminotransferase 1 (370 aa).

K222 is modified (N6-(pyridoxal phosphate)lysine).

The protein belongs to the class-II pyridoxal-phosphate-dependent aminotransferase family. Histidinol-phosphate aminotransferase subfamily. As to quaternary structure, homodimer. Requires pyridoxal 5'-phosphate as cofactor.

The enzyme catalyses L-histidinol phosphate + 2-oxoglutarate = 3-(imidazol-4-yl)-2-oxopropyl phosphate + L-glutamate. It participates in amino-acid biosynthesis; L-histidine biosynthesis; L-histidine from 5-phospho-alpha-D-ribose 1-diphosphate: step 7/9. The sequence is that of Histidinol-phosphate aminotransferase 1 from Bacillus cereus (strain ATCC 10987 / NRS 248).